Reading from the N-terminus, the 330-residue chain is Ig gamma-2A chain C region, A allele (330 aa).

3 consecutive Ig-like domains span residues 6-98, 121-220, and 229-325; these read PSVY…KKIE, PSVF…RTIS, and PQVY…KSFS. 3 disulfides stabilise this stretch: C27–C82, C144–C204, and C250–C308. N180 is a glycosylation site (N-linked (GlcNAc...) asparagine).

In Mus musculus (Mouse), this protein is Ig gamma-2A chain C region, A allele (Ighg).